Here is a 298-residue protein sequence, read N- to C-terminus: GTP cyclohydrolase FolE2 (298 aa).

It belongs to the GTP cyclohydrolase IV family.

It catalyses the reaction GTP + H2O = 7,8-dihydroneopterin 3'-triphosphate + formate + H(+). Its pathway is cofactor biosynthesis; 7,8-dihydroneopterin triphosphate biosynthesis; 7,8-dihydroneopterin triphosphate from GTP: step 1/1. Converts GTP to 7,8-dihydroneopterin triphosphate. The chain is GTP cyclohydrolase FolE2 from Xylella fastidiosa (strain M12).